The primary structure comprises 176 residues: Large ribosomal subunit protein uL10 (176 aa).

The protein belongs to the universal ribosomal protein uL10 family. Part of the ribosomal stalk of the 50S ribosomal subunit. The N-terminus interacts with L11 and the large rRNA to form the base of the stalk. The C-terminus forms an elongated spine to which L12 dimers bind in a sequential fashion forming a multimeric L10(L12)X complex.

Functionally, forms part of the ribosomal stalk, playing a central role in the interaction of the ribosome with GTP-bound translation factors. This is Large ribosomal subunit protein uL10 from Acaryochloris marina (strain MBIC 11017).